A 427-amino-acid polypeptide reads, in one-letter code: UDP-N-acetyl-D-mannosamine dehydrogenase (427 aa).

Residues Tyr-19, Ile-20, Asp-39, Arg-44, Thr-91, and Thr-130 each contribute to the NAD(+) site. UDP-N-acetyl-alpha-D-mannosaminouronate-binding residues include Arg-155, Val-156, Lys-207, Asn-211, Arg-214, His-245, Arg-247, and Gly-258. Lys-207 (proton donor/acceptor) is an active-site residue. Cys-261 functions as the Nucleophile in the catalytic mechanism. UDP-N-acetyl-alpha-D-mannosaminouronate-binding residues include Tyr-318 and Lys-319. An NAD(+)-binding site is contributed by Arg-326. Lys-404 provides a ligand contact to UDP-N-acetyl-alpha-D-mannosaminouronate.

This sequence belongs to the UDP-glucose/GDP-mannose dehydrogenase family. As to quaternary structure, homotetramer; probably dimer of dimers.

It carries out the reaction UDP-N-acetyl-alpha-D-mannosamine + 2 NAD(+) + H2O = UDP-N-acetyl-alpha-D-mannosaminouronate + 2 NADH + 3 H(+). Functionally, catalyzes the four-electron oxidation of UDP-N-acetyl-D-mannosamine (UDP-ManNAc), reducing NAD(+) and releasing UDP-N-acetylmannosaminuronic acid (UDP-ManNAcA). The sequence is that of UDP-N-acetyl-D-mannosamine dehydrogenase (wecC) from Methanococcus maripaludis (strain C7 / ATCC BAA-1331).